The primary structure comprises 68 residues: Conotoxin Cal14.13a (68 aa).

The signal sequence occupies residues 1–21 (MKLCVVIVLLMLAMPFNGGEA). Residues 22 to 38 (SRFFNQHARSQRSGMKT) constitute a propeptide that is removed on maturation. The residue at position 66 (valine 66) is a Valine amide.

Post-translationally, contains 2 disulfide bonds. As to expression, expressed by the venom duct.

It localises to the secreted. Functionally, probable neurotoxin with unknown target. Possibly targets ion channels. In Californiconus californicus (California cone), this protein is Conotoxin Cal14.13a.